Here is a 275-residue protein sequence, read N- to C-terminus: Undecaprenyl-diphosphatase (275 aa).

8 consecutive transmembrane segments (helical) span residues 2–22, 43–63, 83–103, 111–131, 161–181, 186–206, 225–245, and 255–275; these read LDIF…FLPI, FINM…IVIY, WQIW…GLPL, MTSW…FIVL, VLSM…AMLI, YVAT…ASLL, ILLV…KFLL, and PFGW…LVFA.

The protein belongs to the UppP family.

The protein resides in the cell membrane. The catalysed reaction is di-trans,octa-cis-undecaprenyl diphosphate + H2O = di-trans,octa-cis-undecaprenyl phosphate + phosphate + H(+). In terms of biological role, catalyzes the dephosphorylation of undecaprenyl diphosphate (UPP). Confers resistance to bacitracin. In Lactobacillus delbrueckii subsp. bulgaricus (strain ATCC 11842 / DSM 20081 / BCRC 10696 / JCM 1002 / NBRC 13953 / NCIMB 11778 / NCTC 12712 / WDCM 00102 / Lb 14), this protein is Undecaprenyl-diphosphatase.